Reading from the N-terminus, the 527-residue chain is Peptide chain release factor 3 (527 aa).

The tr-type G domain occupies 10–278; that stretch reads DKRRTFAIIS…AFIEYAPAPL (269 aa). Residues 19–26, 87–91, and 141–144 each bind GTP; these read SHPDAGKT, DTPGH, and NKLD.

This sequence belongs to the TRAFAC class translation factor GTPase superfamily. Classic translation factor GTPase family. PrfC subfamily.

The protein resides in the cytoplasm. Increases the formation of ribosomal termination complexes and stimulates activities of RF-1 and RF-2. It binds guanine nucleotides and has strong preference for UGA stop codons. It may interact directly with the ribosome. The stimulation of RF-1 and RF-2 is significantly reduced by GTP and GDP, but not by GMP. The sequence is that of Peptide chain release factor 3 from Pelobacter propionicus (strain DSM 2379 / NBRC 103807 / OttBd1).